The following is a 1013-amino-acid chain: Poly [ADP-ribose] polymerase 1 (1013 aa).

A2 carries the post-translational modification N-acetylalanine. A PARP-type 1 zinc finger spans residues 9–93 (YRVEYAKSGR…KVKKTAEAGG (85 aa)). Zn(2+)-binding residues include C21 and C24. Phosphoserine is present on S41. Zn(2+)-binding residues include H53 and C56. N6-acetyllysine is present on residues K97 and K105. The PARP-type 2 zinc-finger motif lies at 113–203 (FAAEYAKSNR…VLKKQLPGVK (91 aa)). Zn(2+)-binding residues include C125 and C128. Residue K131 is modified to N6-acetyllysine. Positions 159 and 162 each coordinate Zn(2+). Residues S177, S179, and S185 each carry the phosphoserine modification. K192 is covalently cross-linked (Glycyl lysine isopeptide (Lys-Gly) (interchain with G-Cter in SUMO2)). The disordered stretch occupies residues 198 to 233 (QLPGVKSEGKRKGDEVDGADEVAKKKSKKGKDKDSK). K203 is covalently cross-linked (Glycyl lysine isopeptide (Lys-Gly) (interchain with G-Cter in SUMO1); alternate). K203 is covalently cross-linked (Glycyl lysine isopeptide (Lys-Gly) (interchain with G-Cter in SUMO2); alternate). 2 consecutive short sequence motifs (nuclear localization signal) follow at residues 207–209 (KRK) and 221–226 (KKKSKK). The 135-residue stretch at 225 to 359 (KKGKDKDSKL…VKKQDRIFPP (135 aa)) folds into the PADR1 zinc-binding domain. Residue K249 forms a Glycyl lysine isopeptide (Lys-Gly) (interchain with G-Cter in SUMO2) linkage. 2 positions are modified to phosphoserine: S274 and S277. The segment at 290–332 (GALLPCKECSGQLVFKSDAYYCTGDVTAWTKCMVKTQTPSRKE) is zinc ribbon. Positions 295, 298, 311, and 321 each coordinate Zn(2+). The tract at residues 357–383 (FPPETSAPAPPHLPPSVTSAPTAVNSS) is disordered. Residues 372–383 (SVTSAPTAVNSS) show a composition bias toward polar residues. Positions 373–523 (VTSAPTAVNS…GVNKSEKRMK (151 aa)) are automodification domain. In terms of domain architecture, BRCT spans 385-476 (PADKPLSNMK…KSLQELLSAH (92 aa)). PolyADP-ribosyl aspartic acid is present on D387. Residues E407, E413, E435, E437, E444, E445, and E456 each carry the polyADP-ribosyl glutamic acid modification. K467 participates in a covalent cross-link: Glycyl lysine isopeptide (Lys-Gly) (interchain with G-Cter in SUMO2). A polyADP-ribosyl glutamic acid mark is found at E471 and E484. Residue K486 forms a Glycyl lysine isopeptide (Lys-Gly) (interchain with G-Cter in SUMO1); alternate linkage. K486 is covalently cross-linked (Glycyl lysine isopeptide (Lys-Gly) (interchain with G-Cter in SUMO2); alternate). A polyADP-ribosyl glutamic acid mark is found at E488 and E491. The interval 495-516 (PKGKSAAPSKKSKGLYKEEGVN) is disordered. ADP-ribosylserine occurs at positions 499, 503, and 506. K511 is covalently cross-linked (Glycyl lysine isopeptide (Lys-Gly) (interchain with G-Cter in SUMO2)). E512 and E513 each carry polyADP-ribosyl glutamic acid. Position 518 is an ADP-ribosylserine (S518). E519 carries the post-translational modification PolyADP-ribosyl glutamic acid. Residue K520 is modified to N6-(ADP-ribosyl)lysine. A Glycyl lysine isopeptide (Lys-Gly) (interchain with G-Cter in SUMO2) cross-link involves residue K527. A WGR domain is found at 541 to 637 (SAHVLEKGGK…KNFTKYPKKF (97 aa)). T593 carries the phosphothreonine modification. 2 positions are modified to N6-acetyllysine: K599 and K620. Residues 661–778 (KSKLPKAVQE…DIEVAYSLLR (118 aa)) enclose the PARP alpha-helical domain. A Glycyl lysine isopeptide (Lys-Gly) (interchain with G-Cter in SUMO1); alternate cross-link involves residue K747. Residue K747 forms a Glycyl lysine isopeptide (Lys-Gly) (interchain with G-Cter in SUMO2); alternate linkage. 2 positions are modified to phosphoserine: S781 and S785. The region spanning 787 to 1013 (DPIDVNYEKL…LKFNFKTSLW (227 aa)) is the PARP catalytic domain. Residues 861 to 863 (HGS), G870, R877, and S903 contribute to the NAD(+) site. E987 functions as the For poly [ADP-ribose] polymerase activity in the catalytic mechanism.

This sequence belongs to the ARTD/PARP family. Homodimer; PARP-type zinc-fingers from separate PARP1 molecules form a dimer module that specifically recognizes DNA strand breaks. Heterodimer; heterodimerizes with PARP2. Interacts (via the PARP catalytic domain) with HPF1. Interacts with NMNAT1. Interacts with nucleosomes; with a preference for nucleosomes containing H2A.X. Interacts with APTX. Component of a base excision repair (BER) complex, containing at least XRCC1, PARP1, PARP2, POLB and LRIG3. Interacts with SRY. The SWAP complex consists of NPM1, NCL, PARP1 and SWAP70. Interacts with TIAM2. Interacts with PARP3; leading to activate PARP1 in absence of DNA. Interacts (when poly-ADP-ribosylated) with CHD1L (via macro domain). Interacts with the DNA polymerase alpha catalytic subunit POLA1; this interaction functions as part of the control of replication fork progression. Interacts with EEF1A1 and TXK. Interacts with RNF4. Interacts with RNF146. Interacts with ZNF423. Interacts with APLF. Interacts with SNAI1 (via zinc fingers); the interaction requires SNAI1 to be poly-ADP-ribosylated and non-phosphorylated (active) by GSK3B. Interacts (when poly-ADP-ribosylated) with PARP9. Interacts with NR4A3; activates PARP1 by improving acetylation of PARP1 and suppressing the interaction between PARP1 and SIRT1. Interacts (via catalytic domain) with PUM3; the interaction inhibits the poly-ADP-ribosylation activity of PARP1 and the degradation of PARP1 by CASP3 following genotoxic stress. Interacts with ZNF365. Interacts with RRP1B. Interacts with TIMELESS; the interaction is direct. Interacts with CGAS; leading to impede the formation of the PARP1-TIMELESS complex. Interacts with KHDC3L, the interaction is increased following the formation of DNA double-strand breaks. Interacts (when auto-poly-ADP-ribosylated) with XRCC1; leading to inhibit PARP1 ADP-ribosyltransferase activity. Interacts with SPINDOC; promoting PARP1 ADP-ribosyltransferase activity. Interacts with BANF1; leading to inhibit PARP1 ADP-ribosyltransferase activity in response to oxidative DNA damage. Interacts (when sumoylated and ubiquitinated) with VCP/p97; leading to its extraction from chromatin. Interacts with YARS1; promoting PARP1 ADP-ribosyltransferase activity. Interacts with PACMP micropeptide; Interacts with PACMP micropeptide; interaction. Interacts (when poly-ADP-ribosylated) with isoform 1 of MACROH2A1; MACROH2A1 specifically binds to poly-ADP-ribose chains and inhibits PARP1 activity, limiting the consumption of nuclear NAD(+). Interacts with CARM1; promoting recruitment to replication forks. Interacts with RECQL. Interacts with ZNF32; the interaction reshapes ZNF432 interacting proteins. Interacts with TPRN; TPRN interacts with a number of DNA damage response proteins, is recruited to sites of DNA damage and may play a role in DNA damage repair. In terms of assembly, interacts (when auto-poly-ADP-ribosylated) with AIFM1. Post-translationally, poly-ADP-ribosylated on serine, glutamate and aspartate residues by autocatalysis. Auto-ADP-ribosylation on serine takes place following interaction with HPF1. Auto poly-ADP-ribosylation on serine residues promotes its dissociation from chromatin. Poly-ADP-ribosylated by PARP2; poly-ADP-ribosylation mediates the recruitment of CHD1L to DNA damage sites. Mono-ADP-ribosylated at Lys-520 by SIRT6 in response to oxidative stress, promoting recruitment to double-strand breaks (DSBs) sites. In terms of processing, S-nitrosylated, leading to inhibit transcription regulation activity. Phosphorylated at Thr-593 by PRKDC in response to DNA damage following virus infection, promoting its translocation to the cytosol. Phosphorylated by TXK. Post-translationally, proteolytically cleaved by caspase-3 (CASP3) and caspase-7 (CASP7) in response to apoptosis to generate the Poly [ADP-ribose] polymerase 1, processed N-terminus and Poly [ADP-ribose] polymerase 1, processed C-terminus forms. In terms of processing, sumoylated with SUMO1 or SUMO2 by PIAS4 following prolonged residence (trapping) to chromatin. Sumoylation promotes ubiquitination by RNF4 and removal from chromatin by VCP/p97. Ubiquitinated by RNF4 following sumoylation by PIAS4 in response to prolonged residence (trapping) to chromatin. Ubiquitination promotes removal from chromatin by VCP/p97.

The protein localises to the chromosome. Its subcellular location is the nucleus. It is found in the nucleolus. It localises to the cytoplasm. The protein resides in the cytosol. The catalysed reaction is NAD(+) + (ADP-D-ribosyl)n-acceptor = nicotinamide + (ADP-D-ribosyl)n+1-acceptor + H(+).. It catalyses the reaction L-seryl-[protein] + NAD(+) = O-(ADP-D-ribosyl)-L-seryl-[protein] + nicotinamide + H(+). It carries out the reaction L-aspartyl-[protein] + NAD(+) = 4-O-(ADP-D-ribosyl)-L-aspartyl-[protein] + nicotinamide. The enzyme catalyses L-glutamyl-[protein] + NAD(+) = 5-O-(ADP-D-ribosyl)-L-glutamyl-[protein] + nicotinamide. The catalysed reaction is L-tyrosyl-[protein] + NAD(+) = O-(ADP-D-ribosyl)-L-tyrosyl-[protein] + nicotinamide + H(+). It catalyses the reaction L-histidyl-[protein] + NAD(+) = N(tele)-(ADP-D-ribosyl)-L-histidyl-[protein] + nicotinamide + H(+). Its activity is regulated as follows. ADP-ribosyltransferase activity is regulated via an allosteric activation mechanism. In absence of activation signal, PARP1 is autoinhibited by the PARP alpha-helical domain (also named HD region), which prevents effective NAD(+)-binding. Activity is highly stimulated by signals, such as DNA strand breaks. Binding to damaged DNA unfolds the PARP alpha-helical domain, relieving autoinhibition. Poly-ADP-ribosyltransferase activity is tightly regulated and PARP1 is removed from damaged chromatin following initial poly-ADP-ribosylation of chromatin to avoid prolonged residence (trapping) that has cytotoxic consequences. A number of factors (VCP/p97) or post-translational modifications (auto-poly-ADP-ribosylation or ubiquitination) promote PARP1 removal from chromatin. Poly-ADP-ribosyltransferase that mediates poly-ADP-ribosylation of proteins and plays a key role in DNA repair. Mediates glutamate, aspartate, serine, histidine or tyrosine ADP-ribosylation of proteins: the ADP-D-ribosyl group of NAD(+) is transferred to the acceptor carboxyl group of target residues and further ADP-ribosyl groups are transferred to the 2'-position of the terminal adenosine moiety, building up a polymer with an average chain length of 20-30 units. Serine ADP-ribosylation of proteins constitutes the primary form of ADP-ribosylation of proteins in response to DNA damage. Specificity for the different amino acids is conferred by interacting factors, such as HPF1 and NMNAT1. Following interaction with HPF1, catalyzes serine ADP-ribosylation of target proteins; HPF1 confers serine specificity by completing the PARP1 active site. Also catalyzes tyrosine ADP-ribosylation of target proteins following interaction with HPF1. Following interaction with NMNAT1, catalyzes glutamate and aspartate ADP-ribosylation of target proteins; NMNAT1 confers glutamate and aspartate specificity. PARP1 initiates the repair of DNA breaks: recognizes and binds DNA breaks within chromatin and recruits HPF1, licensing serine ADP-ribosylation of target proteins, such as histones (H2BS6ADPr and H3S10ADPr), thereby promoting decompaction of chromatin and the recruitment of repair factors leading to the reparation of DNA strand breaks. HPF1 initiates serine ADP-ribosylation but restricts the polymerase activity of PARP1 in order to limit the length of poly-ADP-ribose chains. In addition to base excision repair (BER) pathway, also involved in double-strand breaks (DSBs) repair: together with TIMELESS, accumulates at DNA damage sites and promotes homologous recombination repair by mediating poly-ADP-ribosylation. Mediates the poly-ADP-ribosylation of a number of proteins, including itself, APLF, CHFR and NFAT5. In addition to proteins, also able to ADP-ribosylate DNA: catalyzes ADP-ribosylation of DNA strand break termini containing terminal phosphates and a 2'-OH group in single- and double-stranded DNA, respectively. Required for PARP9 and DTX3L recruitment to DNA damage sites. PARP1-dependent PARP9-DTX3L-mediated ubiquitination promotes the rapid and specific recruitment of 53BP1/TP53BP1, UIMC1/RAP80, and BRCA1 to DNA damage sites. PARP1-mediated DNA repair in neurons plays a role in sleep: senses DNA damage in neurons and promotes sleep, facilitating efficient DNA repair. In addition to DNA repair, also involved in other processes, such as transcription regulation, programmed cell death, membrane repair, adipogenesis and innate immunity. Acts as a repressor of transcription: binds to nucleosomes and modulates chromatin structure in a manner similar to histone H1, thereby altering RNA polymerase II. Acts both as a positive and negative regulator of transcription elongation, depending on the context. Acts as a positive regulator of transcription elongation by mediating poly-ADP-ribosylation of NELFE, preventing RNA-binding activity of NELFE and relieving transcription pausing. Acts as a negative regulator of transcription elongation in response to DNA damage by catalyzing poly-ADP-ribosylation of CCNT1, disrupting the phase separation activity of CCNT1 and subsequent activation of CDK9. Involved in replication fork progression following interaction with CARM1: mediates poly-ADP-ribosylation at replication forks, slowing fork progression. Poly-ADP-ribose chains generated by PARP1 also play a role in poly-ADP-ribose-dependent cell death, a process named parthanatos. Also acts as a negative regulator of the cGAS-STING pathway. Acts by mediating poly-ADP-ribosylation of CGAS: PARP1 translocates into the cytosol following phosphorylation by PRKDC and catalyzes poly-ADP-ribosylation and inactivation of CGAS. Acts as a negative regulator of adipogenesis: catalyzes poly-ADP-ribosylation of histone H2B on 'Glu-35' (H2BE35ADPr) following interaction with NMNAT1, inhibiting phosphorylation of H2B at 'Ser-36' (H2BS36ph), thereby blocking expression of pro-adipogenetic genes. Involved in the synthesis of ATP in the nucleus, together with NMNAT1, PARG and NUDT5. Nuclear ATP generation is required for extensive chromatin remodeling events that are energy-consuming. Its function is as follows. Promotes AIFM1-mediated apoptosis. This form, which translocates into the cytoplasm following cleavage by caspase-3 (CASP3) and caspase-7 (CASP7) in response to apoptosis, is auto-poly-ADP-ribosylated and serves as a poly-ADP-ribose carrier to induce AIFM1-mediated apoptosis. Functionally, this cleavage form irreversibly binds to DNA breaks and interferes with DNA repair, promoting DNA damage-induced apoptosis. This Cricetulus griseus (Chinese hamster) protein is Poly [ADP-ribose] polymerase 1 (PARP1).